The following is a 316-amino-acid chain: Ribosomal RNA small subunit methyltransferase H (316 aa).

Residues 35-37, Asp-55, Tyr-79, Asp-100, and Gln-107 contribute to the S-adenosyl-L-methionine site; that span reads GGH.

This sequence belongs to the methyltransferase superfamily. RsmH family.

The protein localises to the cytoplasm. It carries out the reaction cytidine(1402) in 16S rRNA + S-adenosyl-L-methionine = N(4)-methylcytidine(1402) in 16S rRNA + S-adenosyl-L-homocysteine + H(+). Functionally, specifically methylates the N4 position of cytidine in position 1402 (C1402) of 16S rRNA. The protein is Ribosomal RNA small subunit methyltransferase H of Nitrosospira multiformis (strain ATCC 25196 / NCIMB 11849 / C 71).